The chain runs to 242 residues: Pyr4-family terpene cyclase mfmH (242 aa).

4 consecutive transmembrane segments (helical) span residues 25–45 (VQDG…ILYI), 55–75 (GMPL…GAAI), 80–100 (AQVV…YTTW), and 116–136 (NLGW…WAFL). N-linked (GlcNAc...) asparagine glycosylation is present at Asn-170. 2 helical membrane passes run 175–195 (SWGI…IFVW) and 211–231 (VTIF…FVYA).

Belongs to the paxB family.

The protein resides in the membrane. The protein operates within secondary metabolite biosynthesis; terpenoid biosynthesis. In terms of biological role, terpene cyclase; part of the gene cluster that mediates the biosynthesis of the phthalide-terpenoid hybrid 11'-O-desmethylfendlerol. Within the pathway, mfmH catalyzes the last step and cyclizes the prenyl unit of 5-O-farnesylcyclopolic acid into a drimane-like structure to yield 11'-O-desmethylfendlerol. The biosynthesis of 11'-O-desmethylfendlerol begins with the NR-PKS mfmB that forms 3,5-dimethylorsellinic acid (DMOA), which is then transformed into the phthalide 5,7-dihydroxy-4-(hydroxymethyl)-6-methylphthalide by the cytochrome P450 monooxygenase mfmA and the hydrolase mfmC. Subsequently, the methyltransferase mfmE catalyzes 7-O-methylation to yield 5-hydroxy-4-(hydroxymethyl)-7-methoxy-6-methylphthalide, which undergoes C-3 hydroxylation by the cytochrome P450 monooxygenase mfmF. The resultant cyclopolic acid (2,5-dihydroxy-4-(hydroxymethyl)-7-methoxy-6-methylphthalide) is then farnesylated by the DMATS-type prenyltransferase mfmD to afford 5-O-farnesylcyclopolic acid. Finally, the Pyr4-family terpene cyclase mfmH cyclizes the farnesyl moiety of 5-O-farnesylcyclopolic acid into a drimane-like structure, thus completing the biosynthesis of 11'-O-desmethylfendlerol. The sequence is that of Pyr4-family terpene cyclase mfmH from Annulohypoxylon moriforme (Filamentous fungus).